The following is a 761-amino-acid chain: Semaphorin-3D (761 aa).

The signal sequence occupies residues 1-24 (MRASQVPNACSLLSLAMLFFPVTG). A Sema domain is found at 32-519 (RLKLSYKDLL…SRDGLVQLSL (488 aa)). Cys105 and Cys116 are oxidised to a cystine. N-linked (GlcNAc...) asparagine glycosylation occurs at Asn127. Cystine bridges form between Cys134/Cys143, Cys274/Cys386, Cys298/Cys346, and Cys522/Cys540. Residues 552–670 (PTSKRRARRQ…IHTIVKLNLN (119 aa)) enclose the Ig-like C2-type domain. A glycan (N-linked (GlcNAc...) asparagine) is linked at Asn595. A disulfide bond links Cys653 and Cys719. Residues 728-754 (RRQRNKGGAKWKHVQEMKKKRNRRHHE) show a composition bias toward basic residues. Positions 728–761 (RRQRNKGGAKWKHVQEMKKKRNRRHHEPARPPST) are disordered.

It belongs to the semaphorin family. Developing spinal cord and developing visual system. Collapsin-1, -2, -3, and -5 bind to overlapping but distinct axon tracts.

It localises to the secreted. Its function is as follows. Induces the collapse and paralysis of neuronal growth cones. Could potentially act as repulsive cues toward specific neuronal populations. Binds to neuropilin. This is Semaphorin-3D (SEMA3D) from Gallus gallus (Chicken).